The following is a 636-amino-acid chain: MKSQQEQHFDYVKIGIASPERVRQWGERTLPNGQTVGEVTKPETINYRTLKPEMDGLFCERIFGPAKDWECHCGKYKRVRHRGIVCERCGVEVTESRVRRHRMGYIKLAAAVTHVWYLKGIPSYLSILLDMALRDVEQIVYFNAYVVLDPGNATNLSYKQLLTEDQWLEIEEQLYSEDSQLEDVEVGIGAEAIERLLQELELEAVAEELREGIANSKGQKRAKLIKRLRVIDNFIATGARPEWMVLNSIPVIPPDLRPMVQLDGGRFATSDLNDLYRRVINRNNRLARLQEILAPEIIVRNEKRMLQEAVDALIDNGRRGRTVVGANNRPLKSLSDIIEGKQGRFRQNLLGKRVDYSGRSVIVVGPKLKIYQCGLPREMAIELFQPFVIQRLIKSTIVSNIKAAKKLIQRGDESVWDVLAEVITGHPVLLNRAPTLHRLGIQAFEPILVEGRAIQLHPLVCPAFNADFDGDQMAVHVPLSLEAQAEARLLMLACHNILSPATGKPIVAPSQDMVLGCYYLTAENPGAQRGAGRYFSSMDDALRAYEQGDVDLHAYVWLRYLGDVETNEADDRVLESETLEDGSILKIYRERKVRETAEGEMISQFIRTTPGRIIYNKTIQDALDLTERTLPEGLPV.

Residues C71, C73, C86, and C89 each coordinate Zn(2+). D467, D469, and D471 together coordinate Mg(2+).

It belongs to the RNA polymerase beta' chain family. RpoC1 subfamily. In terms of assembly, in cyanobacteria the RNAP catalytic core is composed of 2 alpha, 1 beta, 1 beta', 1 gamma and 1 omega subunit. When a sigma factor is associated with the core the holoenzyme is formed, which can initiate transcription. Mg(2+) is required as a cofactor. It depends on Zn(2+) as a cofactor.

It carries out the reaction RNA(n) + a ribonucleoside 5'-triphosphate = RNA(n+1) + diphosphate. In terms of biological role, DNA-dependent RNA polymerase catalyzes the transcription of DNA into RNA using the four ribonucleoside triphosphates as substrates. In Picosynechococcus sp. (strain ATCC 27264 / PCC 7002 / PR-6) (Agmenellum quadruplicatum), this protein is DNA-directed RNA polymerase subunit gamma.